Consider the following 626-residue polypeptide: Leucine-rich repeat and fibronectin type-III domain-containing protein 3 (626 aa).

The signal sequence occupies residues 1–16; sequence MAVLPLLLCLLPLAPA. Topologically, residues 17-539 are extracellular; the sequence is SSPPQPATSS…PHAPFLGGTM (523 aa). One can recognise an LRRNT domain in the interval 19 to 59; it reads PPQPATSSPCPRRCRCQTQSLPLSVLCPGAGLLFVPPSLDR. LRR repeat units lie at residues 84–105, 108–129, 132–153, 157–178, 181–202, and 205–226; these read GLLH…AFAD, ALRA…QLRG, NLRH…ALDD, TLED…ALGR, NVNT…AFSR, and KLAR…PLFS. The LRRCT domain maps to 249–295; the sequence is NPLHCNCELVWLRRLAREDDLEACASPPALGGRYFWAVGEEEFVCEP. An Ig-like domain is found at 295-382; sequence PPVVTHRSPP…GEATAAVELT (88 aa). Residues 308–395 form the Fibronectin type-III 1 domain; the sequence is PAGRPAALRC…PPPPQLANST (88 aa). Cys-317 and Cys-366 form a disulfide bridge. Residues Asn-339, Asn-348, and Asn-393 are each glycosylated (N-linked (GlcNAc...) asparagine). A disordered region spans residues 382 to 423; that stretch reads TVGPPPPPQLANSTSCDPPRDGEPDALTPPSAASASAKVADT. Residues 406-423 show a composition bias toward low complexity; sequence DALTPPSAASASAKVADT. A Fibronectin type-III 2 domain is found at 425 to 523; that stretch reads APTDRGVQVT…GCARFSTEPA (99 aa). A helical membrane pass occupies residues 540 to 560; that stretch reads IIALGGVIVASVLVFIFVLLL. Residues 561–626 are Cytoplasmic-facing; that stretch reads RYKVHGVQPP…WGPSHEPAGP (66 aa).

It belongs to the LRFN family. Can form heteromeric complexes with LRFN1, LRFN2, LRFN4 and LRFN5. Able to form homomeric complexes across cell junctions, between adjacent cells. Does not interact with DLG4. In terms of processing, N-glycosylated. In terms of tissue distribution, expressed in brain. Within brain, expressed in hippocampus, cerebellum, olfactory bulb and forebrain (at protein level).

It is found in the cell membrane. It localises to the cell projection. Its subcellular location is the axon. The protein resides in the dendrite. The protein localises to the synapse. It is found in the presynaptic cell membrane. It localises to the postsynaptic cell membrane. Its function is as follows. Cell adhesion molecule that mediates homophilic cell-cell adhesion in a Ca(2+)-independent manner. Promotes neurite outgrowth in hippocampal neurons. The sequence is that of Leucine-rich repeat and fibronectin type-III domain-containing protein 3 from Rattus norvegicus (Rat).